The chain runs to 273 residues: Karrikin insensitive 2 receptor B (273 aa).

Catalysis depends on Ser-95, which acts as the Nucleophile. The active site involves Asp-217.

The protein belongs to the AB hydrolase superfamily. As to expression, expressed in stigma.

The protein resides in the nucleus. The protein localises to the cytoplasm. May be involved in plant olfaction during volatile communication. The chain is Karrikin insensitive 2 receptor B from Petunia hybrida (Petunia).